Consider the following 438-residue polypeptide: Myosin light chain kinase, smooth muscle (438 aa).

Residues 1 to 241 (FRLVEKKTGK…CTQCLQHPWL (241 aa)) enclose the Protein kinase domain. Lys15 lines the ATP pocket. Phosphotyrosine; by ABL1 is present on Tyr97. Asp107 (proton acceptor) is an active-site residue. Position 157 is a phosphotyrosine; by ABL1 (Tyr157). Residues 233 to 296 (TQCLQHPWLX…SGLSGRKSST (64 aa)) are calmodulin-binding. A phosphoserine mark is found at Ser281, Ser282, Ser294, Ser295, and Ser298. The interval 283–438 (MAMISGLSGR…GEGGEEEEEE (156 aa)) is telokin. The disordered stretch occupies residues 289-309 (LSGRKSSTGSPTSPLNAEKLE). Polar residues predominate over residues 292-303 (RKSSTGSPTSPL). The residue at position 300 (Thr300) is a Phosphothreonine. Phosphoserine is present on Ser301. The Ig-like C2-type domain occupies 331–420 (PYFSKTIRDL…GEATCTAELI (90 aa)). The cysteines at positions 352 and 404 are disulfide-linked.

Belongs to the protein kinase superfamily. CAMK Ser/Thr protein kinase family. In terms of assembly, all isoforms including Telokin bind calmodulin. Interacts with SVIL. Interacts with CTTN; this interaction is reduced during thrombin-induced endothelial cell (EC) contraction but is promoted by the barrier-protective agonist sphingosine 1-phosphate (S1P) within lamellipodia. A complex made of ABL1, CTTN and MYLK regulates cortical actin-based cytoskeletal rearrangement critical to sphingosine 1-phosphate (S1P)-mediated endothelial cell (EC) barrier enhancement. Binds to NAA10/ARD1 and PTK2B/PYK2. Mg(2+) serves as cofactor. The cofactor is Ca(2+). Post-translationally, the C-terminus is deglutamylated by AGTPBP1/CCP1, AGBL1/CCP4 and AGBL4/CCP6, leading to the formation of Myosin light chain kinase, smooth muscle, deglutamylated form. The consequences of C-terminal deglutamylation are unknown. In terms of processing, can probably be down-regulated by phosphorylation. Tyrosine phosphorylation by ABL1 increases kinase activity, reverses MLCK-mediated inhibition of Arp2/3-mediated actin polymerization, and enhances CTTN-binding. Phosphorylation by SRC promotes CTTN binding.

Its subcellular location is the cytoplasm. It localises to the cell projection. It is found in the lamellipodium. The protein localises to the cleavage furrow. The protein resides in the cytoskeleton. Its subcellular location is the stress fiber. It carries out the reaction L-seryl-[myosin light chain] + ATP = O-phospho-L-seryl-[myosin light chain] + ADP + H(+). It catalyses the reaction L-threonyl-[myosin light chain] + ATP = O-phospho-L-threonyl-[myosin light chain] + ADP + H(+). In terms of biological role, calcium/calmodulin-dependent myosin light chain kinase implicated in smooth muscle contraction via phosphorylation of myosin light chains (MLC). Also regulates actin-myosin interaction through a non-kinase activity. Phosphorylates PTK2B/PYK2 and myosin light-chains. Involved in the inflammatory response (e.g. apoptosis, vascular permeability, leukocyte diapedesis), cell motility and morphology, airway hyperreactivity and other activities relevant to asthma. Required for tonic airway smooth muscle contraction that is necessary for physiological and asthmatic airway resistance. Necessary for gastrointestinal motility. Implicated in the regulation of endothelial as well as vascular permeability, probably via the regulation of cytoskeletal rearrangements. In the nervous system it has been shown to control the growth initiation of astrocytic processes in culture and to participate in transmitter release at synapses formed between cultured sympathetic ganglion cells. Critical participant in signaling sequences that result in fibroblast apoptosis. Plays a role in the regulation of epithelial cell survival. Required for epithelial wound healing, especially during actomyosin ring contraction during purse-string wound closure. Mediates RhoA-dependent membrane blebbing. Triggers TRPC5 channel activity in a calcium-dependent signaling, by inducing its subcellular localization at the plasma membrane. Promotes cell migration (including tumor cells) and tumor metastasis. PTK2B/PYK2 activation by phosphorylation mediates ITGB2 activation and is thus essential to trigger neutrophil transmigration during acute lung injury (ALI). May regulate optic nerve head astrocyte migration. Probably involved in mitotic cytoskeletal regulation. Regulates tight junction probably by modulating ZO-1 exchange in the perijunctional actomyosin ring. Mediates burn-induced microvascular barrier injury; triggers endothelial contraction in the development of microvascular hyperpermeability by phosphorylating MLC. Essential for intestinal barrier dysfunction. Mediates Giardia spp.-mediated reduced epithelial barrier function during giardiasis intestinal infection via reorganization of cytoskeletal F-actin and tight junctional ZO-1. Necessary for hypotonicity-induced Ca(2+) entry and subsequent activation of volume-sensitive organic osmolyte/anion channels (VSOAC) in cervical cancer cells. The chain is Myosin light chain kinase, smooth muscle (MYLK) from Ovis aries (Sheep).